The sequence spans 754 residues: Protein neuralized (754 aa).

The NHR 1 domain maps to 106–260; sequence PLQFHSVHGD…NCTGIEFLDS (155 aa). Low complexity predominate over residues 280–297; it reads QQQQMPQPAANASSALNS. A disordered region spans residues 280–308; sequence QQQQMPQPAANASSALNSHHPHQQSRRSL. Ser-338 and Ser-341 each carry phosphoserine. The NHR 2 domain occupies 368–523; sequence PVPFHNTKGR…STQSLRMFRQ (156 aa). The RING-type zinc finger occupies 701-742; it reads CTICYENPIDSVLYMCGHMCMCYDCAIEQWRGVGGGQCPLCR.

Its subcellular location is the nucleus. In terms of biological role, involved in neurogenesis. Interacts with other neurogenic proteins in the specification of the neuroblast versus epidermoblast cell fate. The protein is Protein neuralized (neur) of Drosophila melanogaster (Fruit fly).